A 369-amino-acid chain; its full sequence is MVNMETCAMDCCVLKALLAERAHKCLILDCRSFFSFSSCSIVGSSNVRLSTIVKRRAKGSMGLEHIVPNEEQRCRLVAGMYEAVVLLDERTSELDMLRKDSTMMLAVNALCRDSRGSSIYFLKGGYETFSAQCPEFCTKNSPPVGLSLPLCANNVPGSADSNCTPCGTPLYDQGGPVEILPFLYLGSAYHASRKDMLDTLGITALINVSANCPNHFEGHFQYKSIPVEDSHKADISSWFNEAIDFIDSVKNSGGRVFVHCQAGISRSATICLAYLMRTNRVKLDEAFEFVKQRRSIISPNFSFMGQLLQFESQVLAPSCSAEAGSPTISVLDRGTSTTTVFNFPVSIPVHSGANSLSYLQNPITTSPSC.

The region spanning 21-138 is the Rhodanese domain; it reads RAHKCLILDC…FSAQCPEFCT (118 aa). Thr168 is subject to Phosphothreonine; by MAPK1. The Tyrosine-protein phosphatase domain maps to 175–316; that stretch reads GPVEILPFLY…LLQFESQVLA (142 aa). Catalysis depends on Cys260, which acts as the Phosphocysteine intermediate.

The protein belongs to the protein-tyrosine phosphatase family. Non-receptor class dual specificity subfamily. Phosphorylated by MAPK1/ERK2 at Thr-168 and at one or more serine residues in a progesterone-dependent manner. Phosphorylation reduces its rate of degradation but does not seem to affect phosphatase activity. Expressed in XIK-2 kidney cells.

It localises to the nucleus. It carries out the reaction O-phospho-L-seryl-[protein] + H2O = L-seryl-[protein] + phosphate. The enzyme catalyses O-phospho-L-threonyl-[protein] + H2O = L-threonyl-[protein] + phosphate. It catalyses the reaction O-phospho-L-tyrosyl-[protein] + H2O = L-tyrosyl-[protein] + phosphate. Functionally, dual specificity phosphatase that dephosphorylates MAP kinase MAPK1/ERK2 on both 'Thr-188' and 'Tyr-190', regulating its activity during the meiotic cell cycle. The protein is Dual specificity protein phosphatase 1-A of Xenopus laevis (African clawed frog).